Here is a 445-residue protein sequence, read N- to C-terminus: Dihydroorotate dehydrogenase (quinone), mitochondrial (445 aa).

The transit peptide at 1–16 (MNSGFPRILSKKLFTL) directs the protein to the mitochondrion. The chain crosses the membrane as a helical span at residues 39 to 56 (LLKYTVGIAIGSFAGFYF). FMN contacts are provided by residues 124-128 (AGLDK) and Ser-148. Lys-128 contributes to the substrate binding site. 173–177 (NRYGF) provides a ligand contact to substrate. FMN-binding residues include Asn-221 and Asn-251. 251–256 (NVSSPN) provides a ligand contact to substrate. The active-site Nucleophile is Ser-254. Lys-302 and Ser-330 together coordinate FMN. Position 331 to 332 (331 to 332 (NT)) interacts with substrate. Residues Gly-356, Gly-386, and 407 to 408 (YT) contribute to the FMN site.

The protein belongs to the dihydroorotate dehydrogenase family. Type 2 subfamily. The cofactor is FMN.

It is found in the mitochondrion inner membrane. It carries out the reaction (S)-dihydroorotate + a quinone = orotate + a quinol. It functions in the pathway pyrimidine metabolism; UMP biosynthesis via de novo pathway; orotate from (S)-dihydroorotate (quinone route): step 1/1. Catalyzes the conversion of dihydroorotate to orotate with quinone as electron acceptor. In Kluyveromyces lactis (strain ATCC 8585 / CBS 2359 / DSM 70799 / NBRC 1267 / NRRL Y-1140 / WM37) (Yeast), this protein is Dihydroorotate dehydrogenase (quinone), mitochondrial (URA9).